The following is a 568-amino-acid chain: MKETEVEDMDTNRKDGKIKKKEKIVNMKNEEVKSTTKSTLADSDEDYSIITLCTKCLSKKLEDNKNRIILDSKAFKDNRLKGRCSVSSNEDPLDNKLNLSPYFDRSQIIQEIILMNNDELSDVYEIDRYKLGKGSYGNVVKAVSKRTGQQRAIKIIEKKKIHNIERLKREILIMKQMDHPNIIKLYEVYEDNEKLYLVLELCDGGELFDKIVKYGSFSEYEAYKIMKQIFSALYYCHSKNIMHRDLKPENILYVDNTEDSPIQIIDWGFASKCMNNHNLKSVVGTPYYIAPEILRGKYDKRCDIWSSGVIMYILLCGYPPFNGKNNDEILKKVEKGEFVFDSNYWARVSDDAKDLICQCLNYNYKERIDVEQVLKHRWFKKFKSNNLIINKTLNKTLIEKFKEFHKLCKIKKLAVTCIAYQLNEKDIGKLKKTFEAFDHNGDGVLTISEIFQCLKVNDNEFDRELYFLLKQLDTDGNGLIDYTEFLAACLDHSIFQQDVICRNAFNVFDLDGDGVITKDELFKILSFSAVQVSFSKEIIENLIKEVDSNNDGFIDYDEFYKMMTGVKE.

A Protein kinase domain is found at 125-379 (EIDRYKLGKG…VEQVLKHRWF (255 aa)). ATP contacts are provided by residues 131–139 (LGKGSYGNV) and Lys154. Asp245 (proton acceptor) is an active-site residue. The J domain autoinhibitory motif signature appears at 400–408 (KFKEFHKLC). The interval 400-435 (KFKEFHKLCKIKKLAVTCIAYQLNEKDIGKLKKTFE) is j domain. The J domain EF-hand interaction motif signature appears at 409–418 (KIKKLAVTCI). 4 EF-hand domains span residues 425–460 (KDIG…NDNE), 462–495 (DREL…HSIF), 496–531 (QQDV…SAVQ), and 534–568 (FSKE…GVKE). The Ca(2+) site is built by Asp438, Asn440, Asp442, Glu449, Asp473, Asp475, Asn477, Glu484, Asp509, Asp511, Asp513, Glu520, Asp547, Asn549, Asp551, and Glu558.

The protein belongs to the protein kinase superfamily. Ser/Thr protein kinase family. CDPK subfamily. Mg(2+) serves as cofactor. Post-translationally, may be palmitoylated. Autophosphorylated in vitro.

The protein resides in the cytoplasm. It is found in the cytoplasmic vesicle. It localises to the secretory vesicle. The protein localises to the microneme membrane. Its subcellular location is the cell membrane. The catalysed reaction is L-seryl-[protein] + ATP = O-phospho-L-seryl-[protein] + ADP + H(+). It carries out the reaction L-threonyl-[protein] + ATP = O-phospho-L-threonyl-[protein] + ADP + H(+). With respect to regulation, activated by calcium. Upon calcium binding to the EF-hand domains, the C-terminus of the junction domain (J domain) undergoes a conformational change which results in the dissociation of the pseudo-substrate inhibitory motif from the catalytic domain. This, in turn, may facilitate the autophosphorylation of the activation loop at Thr-285, which leads to the kinase activation. In terms of biological role, calcium-dependent protein kinase which acts as a sensor and effector of intracellular Ca(2+) levels probably in part downstream of cGMP-activated PKG kinase. Plays a central role in host erythrocytes and hepatocytes infection cycles. During the liver stage, involved in sporozoite motility and thus in sporozoite invasion of host hepatocytes, probably together with CDPK1 and CDPK4. Involved in merosome egress from host hepatocytes, probably together with CDPK4. Required for the release of hepatic merozoites from merosomes in the host blood stream. During the asexual blood stage, required for merozoite egress from host erythrocytes by triggering microneme secretion. Phosphorylates transporter NPT1 at late schizont stage. This chain is Calcium-dependent protein kinase 5, found in Plasmodium falciparum (isolate 3D7).